We begin with the raw amino-acid sequence, 87 residues long: Small ribosomal subunit protein bS20 (87 aa).

This sequence belongs to the bacterial ribosomal protein bS20 family.

Functionally, binds directly to 16S ribosomal RNA. This Roseobacter denitrificans (strain ATCC 33942 / OCh 114) (Erythrobacter sp. (strain OCh 114)) protein is Small ribosomal subunit protein bS20.